The sequence spans 423 residues: Histidine--tRNA ligase 2 (423 aa).

Belongs to the class-II aminoacyl-tRNA synthetase family. In terms of assembly, homodimer.

The protein localises to the cytoplasm. The catalysed reaction is tRNA(His) + L-histidine + ATP = L-histidyl-tRNA(His) + AMP + diphosphate + H(+). The chain is Histidine--tRNA ligase 2 from Bacillus cereus (strain ATCC 10987 / NRS 248).